The following is a 529-amino-acid chain: Type I restriction enzyme EcoKI methylase subunit (529 aa).

Residues 148–153 (QYFTPR), 178–180 (TAG), and E216 each bind S-adenosyl-L-methionine.

It belongs to the N(4)/N(6)-methyltransferase family. The type I restriction/modification system is composed of three polypeptides R, M and S. The restriction enzyme has stoichiometry R(2)M(2)S(1). The methyltransferase is composed of M(2)S(1). In terms of assembly, (Microbial infection) Interacts with Escherichia phage T7 protein Ocr; this interaction leads to the inhibition of the methyltransferase restriction enzyme M.EcoKI composed of M(2)S(1).

It carries out the reaction a 2'-deoxyadenosine in DNA + S-adenosyl-L-methionine = an N(6)-methyl-2'-deoxyadenosine in DNA + S-adenosyl-L-homocysteine + H(+). The subtype gamma methyltransferase (M) subunit of a type I restriction enzyme. The M and S subunits together form a methyltransferase (MTase) that methylates A-2 on the top and A-3 on the bottom strand of the sequence 5'-AACN(6)GTGC-3'. In the presence of the R subunit the complex can also act as an endonuclease, binding to the same target sequence but cutting the DNA some distance from this site. Whether the DNA is cut or modified depends on the methylation state of the target sequence. When the target site is unmodified, the DNA is cut. When the target site is hemimethylated, the complex acts as a maintenance MTase modifying the DNA so that both strands become methylated. After locating a non-methylated recognition site, the enzyme complex serves as a molecular motor that translocates DNA in an ATP-dependent manner until a collision occurs that triggers cleavage. The chain is Type I restriction enzyme EcoKI methylase subunit from Escherichia coli (strain K12).